The chain runs to 171 residues: RxLR effector protein CRE7 (171 aa).

The first 23 residues, 1 to 23, serve as a signal peptide directing secretion; that stretch reads MRAIAILLAVVATIFASLHGVSA. Positions 46 to 59 match the RxLR-dEER motif; the sequence is RRLRQTGDASDEER.

Belongs to the RxLR effector family.

It localises to the secreted. The protein resides in the host cell. Effector that is involved in host plant infection. Contributes to virulence during the early infection stage, by inhibiting plant defense responses induced by both PAMP-triggered immunity (PTI) and effector-triggered immunity (ETI). The sequence is that of RxLR effector protein CRE7 from Phytophthora infestans (strain T30-4) (Potato late blight agent).